A 131-amino-acid polypeptide reads, in one-letter code: Metalloproteinase inhibitor (131 aa).

The first 29 residues, 1 to 29, serve as a signal peptide directing secretion; that stretch reads MVRKRALGLAGSALTLVLGAVGFTAPAQA. Cystine bridges form between C33–C39 and C93–C98.

Functionally, inhibits microbial metallo-proteinases, such as thermolysin, but not serine, thiol, or carboxyl proteinases. This is Metalloproteinase inhibitor (smpI) from Streptomyces nigrescens.